We begin with the raw amino-acid sequence, 606 residues long: MMRTHEAGSLRAGHAGQSVTLAGWVARRRDHGGVIFIDLRDASGVAQVVFREGEMAERAHRLRSEFCLRITGEVVRRPEGNENPEIGTGDIEVTATELEVLSESAPLPFPLDEHLEVGEETRLRHRYLDLRRNGPAKAMRMRSEVNRIARDVLHGRDFVEVETPTMTRSTPEGARDFLIPARLQPGNWYALPQSPQLFKQLLMVGGLERYFQIARCYRDEDFRADRQPEFTQLDIEMSFVDQDDVIELGEEIISALWRETAGHEIPRPIQRMTYADAMARFGTDKPDLRFGLELTEMTEYFADTPFRVFRAPYVGAVVMPGGADQPRRQLDAWQDWAKQRGAKGLAYVLVGQDGTLSGPVAKNLSDGERDGLVKAVGAAPGDCVFFAAGDRSSSRALLGAARLEIGERCGLIDHDAWSFVWVVDAPMFESIDDTDDVAVGSGRWTAVHHPFTSPNADWVDNFESDPANALAWAYDIVCNGNEIGGGSIRIHRSDVQKRVFELLGISEEQAQDKFGFLLEAFKYGPPPHGGIAFGWDRICMLLAGADSLRDVIAFPKSGGGYDPLTGAPSPITVEQRKEAGVDAKPAAKVGDESISVFPPGVVEKQG.

Residue glutamate 172 participates in L-aspartate binding. The aspartate stretch occupies residues 196 to 199 (QLFK). Residue arginine 218 coordinates L-aspartate. ATP-binding positions include 218-220 (RDE) and glutamine 227. Histidine 448 provides a ligand contact to L-aspartate. Glutamate 482 provides a ligand contact to ATP. Arginine 489 is an L-aspartate binding site. Residue 534–537 (GWDR) coordinates ATP.

This sequence belongs to the class-II aminoacyl-tRNA synthetase family. Type 1 subfamily. In terms of assembly, homodimer.

Its subcellular location is the cytoplasm. The enzyme catalyses tRNA(Asx) + L-aspartate + ATP = L-aspartyl-tRNA(Asx) + AMP + diphosphate. Functionally, aspartyl-tRNA synthetase with relaxed tRNA specificity since it is able to aspartylate not only its cognate tRNA(Asp) but also tRNA(Asn). Reaction proceeds in two steps: L-aspartate is first activated by ATP to form Asp-AMP and then transferred to the acceptor end of tRNA(Asp/Asn). This is Aspartate--tRNA(Asp/Asn) ligase from Saccharopolyspora erythraea (strain ATCC 11635 / DSM 40517 / JCM 4748 / NBRC 13426 / NCIMB 8594 / NRRL 2338).